Reading from the N-terminus, the 215-residue chain is Phosphoenolpyruvate guanylyltransferase (215 aa).

3 residues coordinate phosphoenolpyruvate: threonine 144, glycine 159, and serine 162.

This sequence belongs to the CofC family.

It carries out the reaction phosphoenolpyruvate + GTP + H(+) = enolpyruvoyl-2-diphospho-5'-guanosine + diphosphate. It functions in the pathway cofactor biosynthesis; coenzyme F420 biosynthesis. In terms of biological role, guanylyltransferase that catalyzes the activation of phosphoenolpyruvate (PEP) as enolpyruvoyl-2-diphospho-5'-guanosine, via the condensation of PEP with GTP. It is involved in the biosynthesis of coenzyme F420, a hydride carrier cofactor. The sequence is that of Phosphoenolpyruvate guanylyltransferase from Geodermatophilus obscurus (strain ATCC 25078 / DSM 43160 / JCM 3152 / CCUG 61914 / KCC A-0152 / KCTC 9177 / NBRC 13315 / NRRL B-3577 / G-20).